We begin with the raw amino-acid sequence, 549 residues long: Pleckstrin homology domain-containing family A member 8 (549 aa).

Residues 1 to 93 form the PH domain; sequence MEGVLYKWTN…WLVALGTAKA (93 aa). Disordered stretches follow at residues 180–245 and 257–312; these read NPDL…ENIS and QNDL…QEVQ. Residues 203 to 219 are compositionally biased toward basic and acidic residues; sequence KSNDPKNLHPGETRKDL. Over residues 276-288 the composition is skewed to acidic residues; it reads EPVEEQQTDGSTE. Polar residues predominate over residues 299–309; sequence EVSMSPTQNKQ.

The protein localises to the cytoplasm. The protein resides in the golgi apparatus. It localises to the trans-Golgi network membrane. Its subcellular location is the membrane. Cargo transport protein that is required for apical transport from the trans-Golgi network (TGN) to the plasma membrane. The polypeptide is Pleckstrin homology domain-containing family A member 8 (plekha8) (Danio rerio (Zebrafish)).